Reading from the N-terminus, the 976-residue chain is Poly(ADP-ribose) glycohydrolase (976 aa).

Met1 bears the N-acetylmethionine mark. Residues 1–69 (MNAGPGCEPC…GRAGQHRGSA (69 aa)) are disordered. Positions 1–456 (MNAGPGCEPC…LSPDKKWLGT (456 aa)) are A-domain. Positions 10 to 16 (CTKRPRW) match the Nuclear localization signal motif. Ser22 is subject to Phosphoserine. Residues 37 to 46 (RVLDPKDAHV) are compositionally biased toward basic and acidic residues. Ser68 is subject to Phosphoserine. A PIP-box (PCNA interacting peptide) motif is present at residues 76–83 (QKTITSWM). Phosphoserine is present on residues Ser133 and Ser137. Thr139 bears the Phosphothreonine mark. Residues 183 to 350 (SNANIDRSPQ…PSRFQARDAD (168 aa)) form a disordered region. Composition is skewed to basic and acidic residues over residues 191-206 (PQND…ENRD) and 222-233 (TTEDEQAREAKS). Phosphoserine is present on Ser197. Position 199 is a phosphothreonine (Thr199). Phosphoserine is present on residues Ser261, Ser264, Ser286, Ser291, Ser298, Ser302, and Ser316. Acidic residues predominate over residues 316–331 (SEADEETSPGFDEQED). Polar residues predominate over residues 332–342 (GSSSQTANKPS). N6-acetyllysine is present on Lys340. Position 448 is a phosphoserine (Ser448). The segment at 610 to 795 (QPIPLLKQKM…TEQYSEYTGY (186 aa)) is catalytic. 726-727 (IE) provides a ligand contact to substrate. Asp737 is a catalytic residue. Substrate is bound by residues Asn740 and Gln754. Residues Glu755 and Glu756 contribute to the active site. Residues Tyr795 and 869-874 (NWGCGA) contribute to the substrate site.

The protein belongs to the poly(ADP-ribose) glycohydrolase family. In terms of assembly, interacts with PCNA. Interacts with NUDT5. Ubiquitously expressed.

The protein resides in the nucleus. It localises to the cytoplasm. Its subcellular location is the mitochondrion. The protein localises to the mitochondrion matrix. The enzyme catalyses [(1''-&gt;2')-ADP-alpha-D-ribose](n) + H2O = [(1''-&gt;2')-ADP-alpha-D-ribose](n-1) + ADP-D-ribose. Poly(ADP-ribose) glycohydrolase that degrades poly(ADP-ribose) by hydrolyzing the ribose-ribose bonds present in poly(ADP-ribose). PARG acts both as an endo- and exoglycosidase, releasing poly(ADP-ribose) of different length as well as ADP-ribose monomers. It is however unable to cleave the ester bond between the terminal ADP-ribose and ADP-ribosylated residues, leaving proteins that are mono-ADP-ribosylated. Poly(ADP-ribose) is synthesized after DNA damage is only present transiently and is rapidly degraded by PARG. Required to prevent detrimental accumulation of poly(ADP-ribose) upon prolonged replicative stress, while it is not required for recovery from transient replicative stress. Responsible for the prevalence of mono-ADP-ribosylated proteins in cells, thanks to its ability to degrade poly(ADP-ribose) without cleaving the terminal protein-ribose bond. Required for retinoid acid-dependent gene transactivation, probably by removing poly(ADP-ribose) from histone demethylase KDM4D, allowing chromatin derepression at RAR-dependent gene promoters. Involved in the synthesis of ATP in the nucleus, together with PARP1, NMNAT1 and NUDT5. Nuclear ATP generation is required for extensive chromatin remodeling events that are energy-consuming. This Homo sapiens (Human) protein is Poly(ADP-ribose) glycohydrolase.